Consider the following 585-residue polypeptide: Bifunctional lycopene cyclase/phytoene synthase (585 aa).

Residues 1 to 243 are lycopene beta-cyclase; sequence MGFDYAIVHV…IVFGQLAFDN (243 aa). The next 7 helical transmembrane spans lie at 3 to 23, 35 to 55, 75 to 97, 123 to 141, 151 to 171, 173 to 193, and 221 to 241; these read FDYA…LTLL, KVLF…SYLI, IPLE…YLIL, LAGQ…LRVH, LIVV…YQFI, GLPW…LWLV, and IEEA…QLAF. Residues 250–585 form a phytoene synthase region; that stretch reads TFPALFPKPP…AWRTLNKSIA (336 aa).

The protein in the N-terminal section; belongs to the lycopene beta-cyclase family. In the C-terminal section; belongs to the phytoene/squalene synthase family.

It localises to the membrane. The enzyme catalyses all-trans-lycopene = gamma-carotene. It catalyses the reaction gamma-carotene = all-trans-beta-carotene. It carries out the reaction 2 (2E,6E,10E)-geranylgeranyl diphosphate = 15-cis-phytoene + 2 diphosphate. It functions in the pathway carotenoid biosynthesis; beta-carotene biosynthesis. The protein operates within carotenoid biosynthesis; phytoene biosynthesis; all-trans-phytoene from geranylgeranyl diphosphate: step 1/1. In terms of biological role, bifunctional enzyme that catalyzes the reactions from geranylgeranyl diphosphate to phytoene (phytoene synthase) and lycopene to beta-carotene via the intermediate gamma-carotene (lycopene cyclase). The protein is Bifunctional lycopene cyclase/phytoene synthase of Phaeosphaeria nodorum (strain SN15 / ATCC MYA-4574 / FGSC 10173) (Glume blotch fungus).